Here is a 295-residue protein sequence, read N- to C-terminus: Elongation factor Ts (295 aa).

The segment at 79-82 is involved in Mg(2+) ion dislocation from EF-Tu; that stretch reads TDFV.

This sequence belongs to the EF-Ts family.

Its subcellular location is the cytoplasm. Functionally, associates with the EF-Tu.GDP complex and induces the exchange of GDP to GTP. It remains bound to the aminoacyl-tRNA.EF-Tu.GTP complex up to the GTP hydrolysis stage on the ribosome. The chain is Elongation factor Ts from Bacillus mycoides (strain KBAB4) (Bacillus weihenstephanensis).